The following is a 90-amino-acid chain: Putative membrane protein insertion efficiency factor (90 aa).

It belongs to the UPF0161 family.

The protein localises to the cell inner membrane. Its function is as follows. Could be involved in insertion of integral membrane proteins into the membrane. The protein is Putative membrane protein insertion efficiency factor of Bordetella bronchiseptica (strain ATCC BAA-588 / NCTC 13252 / RB50) (Alcaligenes bronchisepticus).